The chain runs to 406 residues: Glutamyl-tRNA reductase (406 aa).

Substrate contacts are provided by residues 50–53 (TCNR), Ser107, 112–114 (EPQ), and Gln118. Catalysis depends on Cys51, which acts as the Nucleophile. 187–192 (GAGEMG) lines the NADP(+) pocket.

Belongs to the glutamyl-tRNA reductase family. Homodimer.

It carries out the reaction (S)-4-amino-5-oxopentanoate + tRNA(Glu) + NADP(+) = L-glutamyl-tRNA(Glu) + NADPH + H(+). Its pathway is porphyrin-containing compound metabolism; protoporphyrin-IX biosynthesis; 5-aminolevulinate from L-glutamyl-tRNA(Glu): step 1/2. Its function is as follows. Catalyzes the NADPH-dependent reduction of glutamyl-tRNA(Glu) to glutamate 1-semialdehyde (GSA). The sequence is that of Glutamyl-tRNA reductase from Aquifex aeolicus (strain VF5).